Here is a 173-residue protein sequence, read N- to C-terminus: Crossover junction endodeoxyribonuclease RuvC (173 aa).

Catalysis depends on residues D8, E67, and D139. The Mg(2+) site is built by D8, E67, and D139.

It belongs to the RuvC family. As to quaternary structure, homodimer which binds Holliday junction (HJ) DNA. The HJ becomes 2-fold symmetrical on binding to RuvC with unstacked arms; it has a different conformation from HJ DNA in complex with RuvA. In the full resolvosome a probable DNA-RuvA(4)-RuvB(12)-RuvC(2) complex forms which resolves the HJ. Mg(2+) is required as a cofactor.

It localises to the cytoplasm. It catalyses the reaction Endonucleolytic cleavage at a junction such as a reciprocal single-stranded crossover between two homologous DNA duplexes (Holliday junction).. The RuvA-RuvB-RuvC complex processes Holliday junction (HJ) DNA during genetic recombination and DNA repair. Endonuclease that resolves HJ intermediates. Cleaves cruciform DNA by making single-stranded nicks across the HJ at symmetrical positions within the homologous arms, yielding a 5'-phosphate and a 3'-hydroxyl group; requires a central core of homology in the junction. The consensus cleavage sequence is 5'-(A/T)TT(C/G)-3'. Cleavage occurs on the 3'-side of the TT dinucleotide at the point of strand exchange. HJ branch migration catalyzed by RuvA-RuvB allows RuvC to scan DNA until it finds its consensus sequence, where it cleaves and resolves the cruciform DNA. The sequence is that of Crossover junction endodeoxyribonuclease RuvC from Aeromonas hydrophila subsp. hydrophila (strain ATCC 7966 / DSM 30187 / BCRC 13018 / CCUG 14551 / JCM 1027 / KCTC 2358 / NCIMB 9240 / NCTC 8049).